Consider the following 417-residue polypeptide: Metal-binding activator 1 (417 aa).

Residues 1–40 (MIIFNGNKYACASCIRGHRSSTCRHSHRMLIKVRTRGRPS) constitute a DNA-binding region (copper-fist). 4 residues coordinate Zn(2+): C11, C14, C23, and H25. Disordered regions lie at residues 128 to 198 (FLRK…IFTP) and 216 to 242 (YNSS…AAPH). The residue at position 143 (S143) is a Phosphoserine. The segment covering 153–178 (SEKKERSRLQQEPIRHFSNCCKKDKS) has biased composition (basic and acidic residues). Polar residues-rich tracts occupy residues 179 to 190 (QNPASNGKTNKA) and 228 to 238 (ETLTPQSTTTI). 2 consecutive repeat copies span residues 264-279 (CSCE…CLIH) and 322-337 (CICP…CFSH). Residues 264–337 (CSCEDESCPC…NCTCDGCFSH (74 aa)) form a 2 X 16 AA repeat of C-X-C-X(4)-C-X-C-X-X-C-X-X-H region.

It is found in the nucleus. Regulatory protein involved in Cu/Fe utilization and stress resistance. Involved in basal level transcription of FRE1 and H(2)O(2)-induced transcription of CTT1. Regulates the transcription of CTR1 and CTR3 via the copper ion responsive elements in their promoters. Required for degradation of CTR1. The sequence is that of Metal-binding activator 1 (MAC1) from Saccharomyces cerevisiae (strain ATCC 204508 / S288c) (Baker's yeast).